The primary structure comprises 195 residues: Early E3 22.2 kDa glycoprotein (195 aa).

N20, N61, N76, N88, N126, and N139 each carry an N-linked (GlcNAc...) asparagine; by host glycan.

The protein is Early E3 22.2 kDa glycoprotein of Canine adenovirus serotype 1 (strain Glaxo) (CAdV-1).